Reading from the N-terminus, the 145-residue chain is uncharacterized protein (145 aa).

Helical transmembrane passes span 1-21, 28-48, 54-74, and 96-116; these read MELFKSIVAVIGIIATIYFLI, TVLIGVGLIMSILTLNPMGAL, SMTSGGLIMAICSSMGFAYVM, and FFLIPIATIITFFINIAIPSA.

This sequence belongs to the DcuC/DcuD transporter (TC 2.A.61) family.

The protein localises to the cell membrane. This is an uncharacterized protein from Haemophilus influenzae (strain ATCC 51907 / DSM 11121 / KW20 / Rd).